Here is a 115-residue protein sequence, read N- to C-terminus: Large ribosomal subunit protein bL19 (115 aa).

It belongs to the bacterial ribosomal protein bL19 family.

Its function is as follows. This protein is located at the 30S-50S ribosomal subunit interface and may play a role in the structure and function of the aminoacyl-tRNA binding site. The protein is Large ribosomal subunit protein bL19 of Klebsiella pneumoniae (strain 342).